The following is a 259-amino-acid chain: Small ribosomal subunit protein uS2 (259 aa).

The protein belongs to the universal ribosomal protein uS2 family.

This Fervidobacterium nodosum (strain ATCC 35602 / DSM 5306 / Rt17-B1) protein is Small ribosomal subunit protein uS2.